The primary structure comprises 271 residues: Urease accessory protein UreD (271 aa).

It belongs to the UreD family. UreD, UreF and UreG form a complex that acts as a GTP-hydrolysis-dependent molecular chaperone, activating the urease apoprotein by helping to assemble the nickel containing metallocenter of UreC. The UreE protein probably delivers the nickel.

It is found in the cytoplasm. Its function is as follows. Required for maturation of urease via the functional incorporation of the urease nickel metallocenter. In Halalkalibacterium halodurans (strain ATCC BAA-125 / DSM 18197 / FERM 7344 / JCM 9153 / C-125) (Bacillus halodurans), this protein is Urease accessory protein UreD.